Consider the following 253-residue polypeptide: 2,3-bisphosphoglycerate-dependent phosphoglycerate mutase (253 aa).

Residues 12-19 (RHGESEWN), 25-26 (TG), Arg-64, 91-94 (ERHY), Lys-102, 118-119 (RR), and 187-188 (GN) contribute to the substrate site. His-13 acts as the Tele-phosphohistidine intermediate in catalysis. Catalysis depends on Glu-91, which acts as the Proton donor/acceptor.

This sequence belongs to the phosphoglycerate mutase family. BPG-dependent PGAM subfamily.

It catalyses the reaction (2R)-2-phosphoglycerate = (2R)-3-phosphoglycerate. It participates in carbohydrate degradation; glycolysis; pyruvate from D-glyceraldehyde 3-phosphate: step 3/5. Its function is as follows. Catalyzes the interconversion of 2-phosphoglycerate and 3-phosphoglycerate. The protein is 2,3-bisphosphoglycerate-dependent phosphoglycerate mutase of Streptomyces griseus subsp. griseus (strain JCM 4626 / CBS 651.72 / NBRC 13350 / KCC S-0626 / ISP 5235).